The sequence spans 229 residues: Large ribosomal subunit protein uL1 (229 aa).

It belongs to the universal ribosomal protein uL1 family. As to quaternary structure, part of the 50S ribosomal subunit.

Binds directly to 23S rRNA. The L1 stalk is quite mobile in the ribosome, and is involved in E site tRNA release. In terms of biological role, protein L1 is also a translational repressor protein, it controls the translation of the L11 operon by binding to its mRNA. The protein is Large ribosomal subunit protein uL1 of Pasteurella multocida (strain Pm70).